The following is a 116-amino-acid chain: MNATTEMESPLVFTDSAASKVKSLIDEEGNPDLKLRVFVSGGGCSGFQYGFTFDEAQNADDTVMVKNGVTLLVDSMSFQYLVGAEIDYSEGLEGAQFVIKNPNATTTCGCGSSFSA.

The iron-sulfur cluster site is built by Cys-44, Cys-108, and Cys-110.

It belongs to the HesB/IscA family. Homodimer. Iron-sulfur cluster is required as a cofactor.

Required for insertion of 4Fe-4S clusters. This is Putative iron-sulfur cluster insertion protein ErpA from Thiobacillus denitrificans (strain ATCC 25259 / T1).